Consider the following 157-residue polypeptide: Ribosomal RNA large subunit methyltransferase H (157 aa).

S-adenosyl-L-methionine contacts are provided by residues leucine 73, glycine 105, and 124–129 (LSKMTF).

It belongs to the RNA methyltransferase RlmH family. In terms of assembly, homodimer.

It is found in the cytoplasm. The enzyme catalyses pseudouridine(1915) in 23S rRNA + S-adenosyl-L-methionine = N(3)-methylpseudouridine(1915) in 23S rRNA + S-adenosyl-L-homocysteine + H(+). Functionally, specifically methylates the pseudouridine at position 1915 (m3Psi1915) in 23S rRNA. This chain is Ribosomal RNA large subunit methyltransferase H, found in Christiangramia forsetii (strain DSM 17595 / CGMCC 1.15422 / KT0803) (Gramella forsetii).